The primary structure comprises 290 residues: Dual-specificity RNA pseudouridine synthase RluF (290 aa).

Positions 7-72 (VRLNKYISES…EAEDLVLIAL (66 aa)) constitute an S4 RNA-binding domain. 2 interaction with RNA regions span residues 105–108 (RLDK) and 187–190 (RQIR). D107 functions as the Nucleophile in the catalytic mechanism. A disordered region spans residues 243–290 (VKPKAKAKPKTAGIKRPVVKMEKTAEKGGRPASNGKRFTSPGRKKKGR). Positions 261–271 (VKMEKTAEKGG) are enriched in basic and acidic residues.

It belongs to the pseudouridine synthase RsuA family. Monomer.

It carries out the reaction uridine(2604) in 23S rRNA = pseudouridine(2604) in 23S rRNA. The enzyme catalyses uridine(35) in tRNA(Tyr) = pseudouridine(35) in tRNA(Tyr). Dual specificity enzyme that catalyzes the synthesis of pseudouridine from uracil-2604 in 23S ribosomal RNA and from uracil-35 in the anticodon of tRNA(Tyr). Can, to a small extent, also react with uracil-2605. This Escherichia coli (strain K12) protein is Dual-specificity RNA pseudouridine synthase RluF (rluF).